The following is a 127-amino-acid chain: MPKTFHRTDRVSAQLRRELGTLVHNAVREHGLPSVSVSDVEITRDMAHAKVFVTALMPERSAEAVAGLKELGYRLRMDLARAMKLRHVPELHFHYDDSVDRGEHIDNILRDLPDTLAAEKRREGDDE.

Belongs to the RbfA family. Monomer. Binds 30S ribosomal subunits, but not 50S ribosomal subunits or 70S ribosomes.

It is found in the cytoplasm. Functionally, one of several proteins that assist in the late maturation steps of the functional core of the 30S ribosomal subunit. Associates with free 30S ribosomal subunits (but not with 30S subunits that are part of 70S ribosomes or polysomes). Required for efficient processing of 16S rRNA. May interact with the 5'-terminal helix region of 16S rRNA. In Stenotrophomonas maltophilia (strain R551-3), this protein is Ribosome-binding factor A.